Here is a 301-residue protein sequence, read N- to C-terminus: MPIIIDKDLPARKVLQKENIFVMTKERAETQDIRALKIAILNLMPTKQDTEAQLLRLIGNTPLQLDVHLLHMESHLSRNVTQEHLTSFYKTFRDIENEKFDGLIITGAPVETLAFEEVDYWEELKHIMEYSKTNVTSTLHICWGAQAGLYYHYGVPKYPLKEKVFGVFEHEVCEQHVKLLQGFDELFFAPHSRHTEVRENDIRGVKELTLLANSEEAGVHLVIGPEGRQVFALGHSEYSCETLKQEYERDRDKGLNIDVPKNYFKHNNPDEKPLVRWRSHGNLLFSNWLNYYVYQETPYIL.

Catalysis depends on Cys-142, which acts as the Acyl-thioester intermediate. Substrate-binding residues include Lys-163 and Ser-192. His-235 functions as the Proton acceptor in the catalytic mechanism. Glu-237 is an active-site residue. Arg-249 contacts substrate.

It belongs to the MetA family.

The protein localises to the cytoplasm. It carries out the reaction L-homoserine + acetyl-CoA = O-acetyl-L-homoserine + CoA. The protein operates within amino-acid biosynthesis; L-methionine biosynthesis via de novo pathway; O-acetyl-L-homoserine from L-homoserine: step 1/1. In terms of biological role, transfers an acetyl group from acetyl-CoA to L-homoserine, forming acetyl-L-homoserine. The sequence is that of Homoserine O-acetyltransferase from Bacillus cereus (strain B4264).